An 863-amino-acid polypeptide reads, in one-letter code: DNA ligase (863 aa).

NAD(+) is bound by residues 76–80, 125–126, and E159; these read DAAYD and SL. K161 functions as the N6-AMP-lysine intermediate in the catalytic mechanism. R182 and E221 together coordinate NAD(+). The disordered stretch occupies residues 237–256; that stretch reads EDAGRPPFANPRNAAAGSLR. Positions 241-253 are enriched in low complexity; it reads RPPFANPRNAAAG. Positions 346 and 370 each coordinate NAD(+). Positions 467, 470, 486, and 492 each coordinate Zn(2+). The 83-residue stretch at 781–863 folds into the BRCT domain; sequence GLPQTLEGKS…DTLLATGDVQ (83 aa).

Belongs to the NAD-dependent DNA ligase family. LigA subfamily. Mg(2+) serves as cofactor. It depends on Mn(2+) as a cofactor.

It catalyses the reaction NAD(+) + (deoxyribonucleotide)n-3'-hydroxyl + 5'-phospho-(deoxyribonucleotide)m = (deoxyribonucleotide)n+m + AMP + beta-nicotinamide D-nucleotide.. In terms of biological role, DNA ligase that catalyzes the formation of phosphodiester linkages between 5'-phosphoryl and 3'-hydroxyl groups in double-stranded DNA using NAD as a coenzyme and as the energy source for the reaction. It is essential for DNA replication and repair of damaged DNA. The sequence is that of DNA ligase from Bifidobacterium animalis subsp. lactis (strain AD011).